The sequence spans 498 residues: MDHNTDPPPTTMVDAAAALLLEPKLEGYDDDGGGEPLQPAPFVSPLDQLMQPPRPLEALLQGPQLPPFLSKTYDLVCEPELDGVISWGHAGNSFVVWDPSAFARDVLPHHFKHNNFSSFVRQLNTYGFRKVHADRWEFAHEDFLRHSKHLLKKIVRRRSSPTQQSGLQPGSSGESGLDPELNTLRREKSALLQEVTRLKQEHLQTIEQMSTLNQRLESAEDRQKQMVSFLAKLLQNPTFLRQLKMHRQQKEIDSTRVKRKFLKHVPHGNIDSGESSSQHTGESNLDFSPTSLDLPATHSDILDLQNFLLEDGDLNLAMLPENIGLDGIEAPDDIGALVQGFDTQEELELGSGVELLEIPPASGPRGQDPTIGRSKGKNVLSPGLDATSSEADCLGSFSDNMGMLSDSMLQTAGKLMDADDDERIWGVDASSALQSSCSGTSQQAYGSLVSDPYLMEMANKPEKFWELDFQALDDGDLQLDKCVIDDPALQQQRGNMNS.

The tract at residues 156-180 (RRRSSPTQQSGLQPGSSGESGLDPE) is disordered. Polar residues predominate over residues 160–174 (SPTQQSGLQPGSSGE). The stretch at 180 to 235 (ELNTLRREKSALLQEVTRLKQEHLQTIEQMSTLNQRLESAEDRQKQMVSFLAKLLQ) forms a coiled coil. Residues 184 to 234 (LRREKSALLQEVTRLKQEHLQTIEQMSTLNQRLESAEDRQKQMVSFLAKLL) are hydrophobic repeat HR-A/B. A Nuclear localization signal motif is present at residues 258–263 (KRKFLK). The segment at 263 to 291 (KHVPHGNIDSGESSSQHTGESNLDFSPTS) is disordered. Positions 272–291 (SGESSSQHTGESNLDFSPTS) are enriched in polar residues. Positions 309-316 (LEDGDLNL) match the Nuclear export signal motif. A disordered region spans residues 356–382 (LEIPPASGPRGQDPTIGRSKGKNVLSP).

It belongs to the HSF family. Class A subfamily. As to quaternary structure, homotrimer. Exhibits temperature-dependent phosphorylation.

It is found in the cytoplasm. The protein localises to the nucleus. Functionally, transcriptional regulator that specifically binds DNA of heat shock promoter elements (HSE). The chain is Heat stress transcription factor A-3 (HSFA3) from Oryza sativa subsp. japonica (Rice).